The sequence spans 61 residues: Metallothionein-2A (61 aa).

At Met-1 the chain carries N-acetylmethionine. The tract at residues 1 to 29 (MDPNCSCAAGGSCTCAGSCKCKDCKCTSC) is beta. A divalent metal cation is bound by residues Cys-5, Cys-7, Cys-13, Cys-15, Cys-19, Cys-21, Cys-24, Cys-26, Cys-29, Cys-33, Cys-34, Cys-36, Cys-37, Cys-41, Cys-44, Cys-48, Cys-50, and Cys-57. The tract at residues 30–61 (KKSCCSCCPVGCAKCAQGCICKGASDKCSCCA) is alpha. Ser-58 carries the phosphoserine modification. A divalent metal cation-binding residues include Cys-59 and Cys-60.

Belongs to the metallothionein superfamily. Type 1 family. As to quaternary structure, interacts with EOLA1.

Its function is as follows. Metallothioneins have a high content of cysteine residues that bind various heavy metals; these proteins are transcriptionally regulated by both heavy metals and glucocorticoids. The chain is Metallothionein-2A (MT2A) from Sus scrofa (Pig).